Reading from the N-terminus, the 198-residue chain is dTTP/UTP pyrophosphatase (198 aa).

D78 functions as the Proton acceptor in the catalytic mechanism.

This sequence belongs to the Maf family. YhdE subfamily. A divalent metal cation is required as a cofactor.

It localises to the cytoplasm. The enzyme catalyses dTTP + H2O = dTMP + diphosphate + H(+). It carries out the reaction UTP + H2O = UMP + diphosphate + H(+). In terms of biological role, nucleoside triphosphate pyrophosphatase that hydrolyzes dTTP and UTP. May have a dual role in cell division arrest and in preventing the incorporation of modified nucleotides into cellular nucleic acids. The polypeptide is dTTP/UTP pyrophosphatase (Chromobacterium violaceum (strain ATCC 12472 / DSM 30191 / JCM 1249 / CCUG 213 / NBRC 12614 / NCIMB 9131 / NCTC 9757 / MK)).